The primary structure comprises 103 residues: Large ribosomal subunit protein bL21 (103 aa).

Belongs to the bacterial ribosomal protein bL21 family. Part of the 50S ribosomal subunit. Contacts protein L20.

Its function is as follows. This protein binds to 23S rRNA in the presence of protein L20. The sequence is that of Large ribosomal subunit protein bL21 from Clostridium kluyveri (strain NBRC 12016).